Consider the following 204-residue polypeptide: Large ribosomal subunit protein uL4 (204 aa).

A disordered region spans residues 49–75 (TKGRSDVSGGGKKPWRQKGRGGARAGS).

This sequence belongs to the universal ribosomal protein uL4 family. In terms of assembly, part of the 50S ribosomal subunit.

Its function is as follows. One of the primary rRNA binding proteins, this protein initially binds near the 5'-end of the 23S rRNA. It is important during the early stages of 50S assembly. It makes multiple contacts with different domains of the 23S rRNA in the assembled 50S subunit and ribosome. In terms of biological role, forms part of the polypeptide exit tunnel. This Campylobacter jejuni subsp. doylei (strain ATCC BAA-1458 / RM4099 / 269.97) protein is Large ribosomal subunit protein uL4.